Here is a 1328-residue protein sequence, read N- to C-terminus: ATP-dependent DNA helicase hus2/rqh1 (1328 aa).

Low complexity-rich tracts occupy residues 217 to 236 (NNLP…NDNN) and 244 to 254 (ASPTPSSVSSQ). Positions 217 to 254 (NNLPFPRLNNNNTNNNNDNNAIEKRDSASPTPSSVSSQ) are disordered. Residues 528 to 707 (INGTLSGKDV…INTLRMENCL (180 aa)) enclose the Helicase ATP-binding domain. Position 555–562 (555–562 (AVIEGGAS)) interacts with ATP. The DEAH box motif lies at 651-654 (DEAH). A Helicase C-terminal domain is found at 728–876 (LYTELYRFIS…ETKERQRQML (149 aa)). The HRDC domain occupies 1115 to 1195 (IDVMTRCLKD…QKFIDEKEQN (81 aa)). Disordered stretches follow at residues 1224 to 1247 (EQGF…GDEE) and 1260 to 1328 (NSQS…QNYR). Residues 1260–1269 (NSQSLTQTGS) are compositionally biased toward polar residues. Residues 1283–1300 (KSYRHKRGSTSYSRKRKY) show a composition bias toward basic residues.

This sequence belongs to the helicase family. RecQ subfamily. Interacts with top3.

It is found in the nucleus. The catalysed reaction is Couples ATP hydrolysis with the unwinding of duplex DNA by translocating in the 3'-5' direction.. It carries out the reaction ATP + H2O = ADP + phosphate + H(+). ATP-dependent 3'-5' DNA-helicase. Has a role in the repair of UV-induced DNA damage in G2 via recombination-mediated repair. Also has a role in the repair of infrared-induced double DNA strand breaks. This is ATP-dependent DNA helicase hus2/rqh1 from Schizosaccharomyces pombe (strain 972 / ATCC 24843) (Fission yeast).